The primary structure comprises 734 residues: Probable inactive histone-lysine N-methyltransferase SUVR1 (734 aa).

The interval 61–163 (QSTEKNKKEE…LPPLKRYVRR (103 aa)) is disordered. Over residues 62–81 (STEKNKKEEEKKKKEEEKKS) the composition is skewed to basic and acidic residues. Residues 98–109 (VQDEEDDMDEDE) show a composition bias toward acidic residues. The segment covering 113-122 (KRRLRSRRGR) has biased composition (basic residues). A compositionally biased stretch (low complexity) spans 123–132 (ASSSSSSSSS). Zn(2+)-binding residues include cysteine 460, cysteine 464, cysteine 468, cysteine 477, cysteine 545, cysteine 549, cysteine 551, and cysteine 555. Positions 460–563 (CSTSCIEDCL…RCGNRVVQRG (104 aa)) constitute a Pre-SET domain. The SET domain maps to 566-696 (NKLQVFFTPN…AMEELAWDYG (131 aa)). Residues 577–579 (KGW) and 652–653 (NH) each bind S-adenosyl-L-methionine. Position 655 (cysteine 655) interacts with Zn(2+). Position 695 (tyrosine 695) interacts with S-adenosyl-L-methionine. Residues 707–723 (KPFDCLCGSRFCRNKKR) enclose the Post-SET domain. Residues cysteine 711, cysteine 713, and cysteine 718 each contribute to the Zn(2+) site.

It belongs to the class V-like SAM-binding methyltransferase superfamily. Histone-lysine methyltransferase family. Interacts with SUVR2 and itself.

The protein resides in the nucleus. It is found in the chromosome. Probable inactive histone-lysine methyltransferase that acts as regulator of transctiptional gene silencing independently of histone H3K9 methylation. Contributes to transcriptional gene silencing at RNA-directed DNA methylation (RdDM) target loci but also at RdDM-independent target loci. The sequence is that of Probable inactive histone-lysine N-methyltransferase SUVR1 (SUVR1) from Arabidopsis thaliana (Mouse-ear cress).